Reading from the N-terminus, the 555-residue chain is Glutamine--tRNA ligase (555 aa).

The short motif at 35–45 is the 'HIGH' region element; it reads PEPNGYLHIGH. ATP contacts are provided by residues 36–38 and 42–48; these read EPN and HIGHAKS. L-glutamine-binding residues include aspartate 68 and tyrosine 213. ATP contacts are provided by residues threonine 232 and 262–263; that span reads RL. The 'KMSKS' region motif lies at 269 to 273; it reads ITSKR.

It belongs to the class-I aminoacyl-tRNA synthetase family. As to quaternary structure, monomer.

The protein localises to the cytoplasm. The enzyme catalyses tRNA(Gln) + L-glutamine + ATP = L-glutaminyl-tRNA(Gln) + AMP + diphosphate. This is Glutamine--tRNA ligase from Azotobacter vinelandii (strain DJ / ATCC BAA-1303).